The chain runs to 32 residues: TKXXEAPAPKGLKGNEMLKGIFLEVKKKFETA.

It is found in the mitochondrion. It localises to the mitochondrion inner membrane. Mitochondrial membrane ATP synthase (F(1)F(0) ATP synthase or Complex V) produces ATP from ADP in the presence of a proton gradient across the membrane which is generated by electron transport complexes of the respiratory chain. F-type ATPases consist of two structural domains, F(1) - containing the extramembraneous catalytic core and F(0) - containing the membrane proton channel, linked together by a central stalk and a peripheral stalk. During catalysis, ATP synthesis in the catalytic domain of F(1) is coupled via a rotary mechanism of the central stalk subunits to proton translocation. Part of the complex F(0) domain. The polypeptide is ATP synthase 28 kDa subunit, mitochondrial (Spinacia oleracea (Spinach)).